Here is a 433-residue protein sequence, read N- to C-terminus: GPI mannosyltransferase 2 (433 aa).

Position 1 (M1) is a topological domain, cytoplasmic. The helical transmembrane segment at 2-22 (IVGLTLYFVLFRSIQYLLVFL) threads the bilayer. Topologically, residues 23–109 (TPIRQFDTST…NNDSIYHALR (87 aa)) are lumenal. Residues N69 and N101 are each glycosylated (N-linked (GlcNAc...) asparagine). The helical transmembrane segment at 110 to 130 (VGVAIENVLFYLSGIVLYFLT) threads the bilayer. Residues 131–161 (KKIFSQNIRQSQFARTIAKKTSLLFFLTSAA) lie on the Cytoplasmic side of the membrane. Residues 162-182 (GFLTSIYSEPLSFFFAFVGIW) form a helical membrane-spanning segment. Topologically, residues 183-215 (SRECSISVPVLGQFDISWRYWFPYSFISMACFT) are lumenal. A helical transmembrane segment spans residues 216-236 (LASLNRSNCVLLGIYFIFDLI). Topologically, residues 237–243 (ELTKNRK) are cytoplasmic. Residues 244–264 (FVKAICFPLLSGSLMFSALLY) traverse the membrane as a helical segment. Topologically, residues 265–318 (QQYYLPYKTFCPQRGEWCKSQLFSSIFITKTSLYSYIQSHYWGVGLLKYWTPNN) are lumenal. Residues 319-339 (IPNFLFAVPNIIILIYSSIYF) traverse the membrane as a helical segment. At 340 to 350 (SKIYPSYNLKA) the chain is on the cytoplasmic side. Residues 351–371 (LVWITRALVVIVCFFAHVQIL) traverse the membrane as a helical segment. At 372–409 (NRIASFLPLHLWYLADRLVKTSDPKKMENPKGDDKIVK) the chain is on the lumenal side. The helical transmembrane segment at 410–430 (FYIYWLAFWIPLQTILFAAFL) threads the bilayer. Over 431-433 (PPA) the chain is Cytoplasmic.

It belongs to the PIGV family. Part of the GPI mannosyltransferase 2 complex composed of GPI18 and PGA1.

It localises to the endoplasmic reticulum membrane. Its pathway is glycolipid biosynthesis; glycosylphosphatidylinositol-anchor biosynthesis. In terms of biological role, mannosyltransferase involved in glycosylphosphatidylinositol-anchor biosynthesis. Responsible for the transfer of the second mannose to the glycosylphosphatidylinositol during GPI precursor assembly. In Saccharomyces cerevisiae (strain ATCC 204508 / S288c) (Baker's yeast), this protein is GPI mannosyltransferase 2 (GPI18).